The sequence spans 330 residues: Formylaminopyrimidine-binding protein (330 aa).

The first 18 residues, 1–18 (MKSFKIISLLLAILFLAS), serve as a signal peptide directing secretion. Cys19 carries the N-palmitoyl cysteine lipid modification. The S-diacylglycerol cysteine moiety is linked to residue Cys19. Residues 38–39 (DW), Tyr90, Asn145, Tyr188, and Glu192 each bind substrate.

Belongs to the NMT1 family. As to quaternary structure, the complex is likely composed of an ATP-binding protein (ThiZ), a transmembrane protein (ThiX) and a solute-binding protein (ThiY).

It localises to the cell membrane. It participates in cofactor biosynthesis; thiamine diphosphate biosynthesis. Functionally, participates in a thiamine pyrimidine salvage pathway as part of the ABC transporter complex ThiXYZ involved in the import of thiamine degradation products. Binds the formylaminopyrimidine N-formyl-4-amino-5-aminomethyl-2-methylpyrimidine (FAMP). Does not bind thiamine. The protein is Formylaminopyrimidine-binding protein of Halalkalibacterium halodurans (strain ATCC BAA-125 / DSM 18197 / FERM 7344 / JCM 9153 / C-125) (Bacillus halodurans).